We begin with the raw amino-acid sequence, 343 residues long: Dimethyladenosine transferase 1, mitochondrial (343 aa).

S-adenosyl-L-methionine-binding positions include 28–31 (QNFL), asparagine 29, leucine 31, glycine 56, glutamate 78, aspartate 133, and asparagine 169.

The protein belongs to the class I-like SAM-binding methyltransferase superfamily. rRNA adenine N(6)-methyltransferase family. KsgA subfamily.

It localises to the mitochondrion. In terms of biological role, probable S-adenosyl-L-methionine-dependent methyltransferase which specifically dimethylates mitochondrial 12S rRNA at the conserved stem loop. Also required for basal transcription of mitochondrial DNA. Stimulates transcription independently of the methyltransferase activity. This Vermamoeba vermiformis (Amoeba) protein is Dimethyladenosine transferase 1, mitochondrial.